Here is a 144-residue protein sequence, read N- to C-terminus: Hexon-interlacing protein (144 aa).

A coiled-coil region spans residues 106 to 133; that stretch reads LTVMLAKLETLTAQLEELSQKVEELADA.

This sequence belongs to the adenoviridae hexon-interlacing protein family. Homotrimer. Interacts with hexon protein; this interaction tethers the hexons together. Self-interacts with adjacent proteins. Interacts with kinesin light chain KLC1; this interaction leads to capsid disruption at the nuclear pore complex during virus entry into host cell.

It is found in the virion. It localises to the host nucleus. Functionally, structural component of the virion that acts as a cement protein on the capsid exterior and forms triskelion structures consisting of three molecules that stabilize three hexon trimers at the center of each icosahedral facet and fixes the peripentonal hexons. Dispensable for assembly. During virus entry, recruits the anterograde motor kinesin-1 to the capsid docked at the nuclear pore complex thereby subjecting the docked capsid to a pulling force. The resulting tension leads to capsid disruption, dispersion of capsid fragments toward cell periphery and eventually viral DNA entry into the host nucleus. This Homo sapiens (Human) protein is Hexon-interlacing protein.